We begin with the raw amino-acid sequence, 412 residues long: MQFFNFLLFYPVFMSIYWIVGSIYFYFTREIRYSLNKKPDINVDELEGITFLLACYNESDTIEDTLSNVLALKYEKKEIIIINDGSSDNTAELIYKIKENNDFIFVDLQENRGKANALNQGIKQASYDYVMCLDADTIVDQDAPYYMIENFKHDPKLGAVTGNPRIRNKSSILGKIQTIEYASLIGCIKRSQTLAGAVNTISGVFTLFKKSAVVDVGYWDTDMITEDIAVSWKLHLRGYRIKYEPLAMCWMLVPETLGGLWKQRVRWAQGGHEVLLRDFFSTMKTKRFPLYILMFEQIISILWVYIVLLYLGYLFITANFLDYTFMTYSFSIFLLSSFTMTFINVIQFTVALFIDSRYEKKNMAGLIFVSWYPTVYWIINAAVVLVAFPKALKRKKGGYATWSSPDRGNTQR.

A run of 4 helical transmembrane segments spans residues 6 to 28 (FLLF…FYFT), 290 to 312 (LYIL…LYLG), 332 to 354 (IFLL…ALFI), and 366 to 388 (LIFV…LVAF).

Belongs to the glycosyltransferase 2 family.

The protein localises to the cell membrane. N-acetylglucosaminyltransferase that catalyzes the polymerization of single monomer units of UDP-N-acetylglucosamine to produce the linear homomer poly-beta-1,6-N-acetyl-D-glucosamine (PNAG, also referred to as PIA), a biofilm adhesin polysaccharide. Requires IcaD for full activity. The sequence is that of Poly-beta-1,6-N-acetyl-D-glucosamine synthase (icaA) from Staphylococcus aureus (strain MSSA476).